The following is a 380-amino-acid chain: Succinyl-diaminopimelate desuccinylase (380 aa).

His-71 contacts Zn(2+). Asp-73 is an active-site residue. Residue Asp-104 participates in Zn(2+) binding. Residue Glu-136 is the Proton acceptor of the active site. The Zn(2+) site is built by Glu-137, Glu-166, and His-351.

This sequence belongs to the peptidase M20A family. DapE subfamily. In terms of assembly, homodimer. Requires Zn(2+) as cofactor. It depends on Co(2+) as a cofactor.

The catalysed reaction is N-succinyl-(2S,6S)-2,6-diaminopimelate + H2O = (2S,6S)-2,6-diaminopimelate + succinate. The protein operates within amino-acid biosynthesis; L-lysine biosynthesis via DAP pathway; LL-2,6-diaminopimelate from (S)-tetrahydrodipicolinate (succinylase route): step 3/3. Catalyzes the hydrolysis of N-succinyl-L,L-diaminopimelic acid (SDAP), forming succinate and LL-2,6-diaminopimelate (DAP), an intermediate involved in the bacterial biosynthesis of lysine and meso-diaminopimelic acid, an essential component of bacterial cell walls. The chain is Succinyl-diaminopimelate desuccinylase from Ehrlichia canis (strain Jake).